Consider the following 1403-residue polypeptide: Perilipin-4 (1403 aa).

The tract at residues 1-21 is disordered; it reads MSASGDGTRVPPKSKGKTLSS. Phosphoserine is present on residues Ser25 and Ser31. The interval 33–70 is disordered; the sequence is RNLVSHTHSSTSTKDLQTATDPSGTPAPSSKVSTNSQM. 29 consecutive repeat copies span residues 104-136, 137-169, 170-202, 203-235, 236-268, 269-301, 302-334, 335-367, 368-400, 401-433, 434-466, 467-499, 500-532, 533-565, 566-598, 599-631, 632-664, 665-697, 698-730, 731-763, 764-796, 797-829, 830-862, 863-895, 896-928, 929-961, 962-994, 995-1027, and 1028-1060. The tract at residues 104–1060 is 29 X 33 AA approximate tandem repeat; that stretch reads GVFGIMDAAK…VTSAMNMAKG (957 aa). Ser1281 carries the post-translational modification Phosphoserine. Residue Thr1287 is modified to Phosphothreonine.

This sequence belongs to the perilipin family. As to expression, specifically expressed in white adipose tissue and also weakly detected in heart and skeletal muscle (at protein level).

It is found in the cell membrane. Its subcellular location is the cytoplasm. The protein localises to the lipid droplet. May play a role in triacylglycerol packaging into adipocytes. May function as a coat protein involved in the biogenesis of lipid droplets. In Mus musculus (Mouse), this protein is Perilipin-4 (Plin4).